A 193-amino-acid chain; its full sequence is Achaete-scute homolog 2 (193 aa).

2 disordered regions span residues 1 to 58 and 128 to 177; these read MDSR…RNER and PLPR…GALS. One can recognise a bHLH domain in the interval 50–102; the sequence is AAVARRNERERNRVKLVNLGFQALRQHVPHGGASKKLSKVETLRSAVEYIRAL. The span at 128–152 shows a compositional bias: low complexity; it reads PLPRAPSGTPATAASPSCASSSPGR.

As to quaternary structure, efficient DNA binding requires dimerization with another basic helix-loop-helix (bHLH) protein. Forms heterodimers with bHLH transcription factor TCF3. May not heterodimerise with bHLH protein HAND1. Expressed in placenta.

Its subcellular location is the nucleus. Its function is as follows. Transcription factor. Binds to E-box motifs 5'-CANNTG-3' in the regulatory elements of target genes, probably as a heterodimer with another basic helix-loop-helix (bHLH) protein such as the transcription factor TCF3. May bind both open and closed chromatin, acting as a pioneer transcription factor to allow other factors to bind and activate lineage-specific genes. Required during post-implantation development for the generation of some differentiated trophoblast cell types. Transcriptional activity of ASCL2 may be antagonised in a subset of trophoblast cells by bHLH transcription factor HAND1, perhaps by competing for dimerization with other bHLH proteins. Involved in differentiation and function of follicular T-helper (Tfh) cells, thereby playing a role in germinal center responses; probably modulates expression of genes involved in Tfh cell function, such as BCL6. May also act as a suppressor of Th1-, Th2- and Th17-cell differentiation. Induces the formation of stem cells in intestinal crypts in vitro, synergistically activating transcription of target genes, such as SOX9, together with TCF4/beta-catenin. May form a bistable transcriptional switch, controlling expression of its own gene together with Wnt/R-spondin signaling, and thereby maintaining stem cell characteristics. Modulates expression of target genes, including perhaps down-regulating EGR1/Krox24 and chemokine CXCL10/Mob-1 and up-regulating CXCR4 and CDKN1C/p57kip2, in Schwann cells. May play a role in reducing proliferation of Schwann cells, perhaps acting via modulation of expression of CDKN1C. May be dispensable for blastocyst formation and later embryonic function. May be involved in the determination of neuronal precursors. The polypeptide is Achaete-scute homolog 2 (ASCL2) (Bos taurus (Bovine)).